We begin with the raw amino-acid sequence, 362 residues long: Serine/threonine-protein kinase ZRK4 (362 aa).

The disordered stretch occupies residues 1–23 (MNDQKMSCWRKKSKKKNSEANQR). The Protein kinase domain occupies 35–362 (LEDLIELCNG…KELKRIERWT (328 aa)). ATP contacts are provided by residues 41-49 (LCNGKSNPI) and K89. D185 functions as the Proton acceptor in the catalytic mechanism.

The protein belongs to the protein kinase superfamily. Ser/Thr protein kinase family. ZRK subfamily.

The catalysed reaction is L-seryl-[protein] + ATP = O-phospho-L-seryl-[protein] + ADP + H(+). It catalyses the reaction L-threonyl-[protein] + ATP = O-phospho-L-threonyl-[protein] + ADP + H(+). This chain is Serine/threonine-protein kinase ZRK4, found in Arabidopsis thaliana (Mouse-ear cress).